Here is a 180-residue protein sequence, read N- to C-terminus: Major urinary protein 5 (180 aa).

The signal sequence occupies residues 1–18 (MKLLLLLCLELTLVYVHA). A disulfide bridge links Cys82 with Cys175.

This sequence belongs to the calycin superfamily. Lipocalin family.

Its subcellular location is the secreted. Major urinary proteins (Mups) bind pheromones, and thus stabilize them to allow slow release into the air from urine marks. May protect pheromones from oxidation. May also act as pheromones themselves. In this context, they play a role in the regulation of social behaviors, such as aggression, mating, pup-suckling, territory establishment and dominance. In Mus musculus (Mouse), this protein is Major urinary protein 5.